We begin with the raw amino-acid sequence, 59 residues long: Sec-independent protein translocase protein TatA (59 aa).

A helical membrane pass occupies residues 1–21 (MGRLGLTEILVIVGIVILLFG).

The protein belongs to the TatA/E family. In terms of assembly, forms a complex with TatC.

The protein localises to the cell inner membrane. In terms of biological role, part of the twin-arginine translocation (Tat) system that transports large folded proteins containing a characteristic twin-arginine motif in their signal peptide across membranes. TatA could form the protein-conducting channel of the Tat system. This chain is Sec-independent protein translocase protein TatA, found in Flavobacterium johnsoniae (strain ATCC 17061 / DSM 2064 / JCM 8514 / BCRC 14874 / CCUG 350202 / NBRC 14942 / NCIMB 11054 / UW101) (Cytophaga johnsonae).